The primary structure comprises 248 residues: Triosephosphate isomerase (248 aa).

9-11 (NWK) provides a ligand contact to substrate. The active-site Electrophile is the histidine 94. Residue glutamate 166 is the Proton acceptor of the active site. Substrate contacts are provided by residues glycine 172, serine 212, and 233–234 (GG).

The protein belongs to the triosephosphate isomerase family. As to quaternary structure, homodimer.

It localises to the cytoplasm. It catalyses the reaction D-glyceraldehyde 3-phosphate = dihydroxyacetone phosphate. It participates in carbohydrate biosynthesis; gluconeogenesis. Its pathway is carbohydrate degradation; glycolysis; D-glyceraldehyde 3-phosphate from glycerone phosphate: step 1/1. Functionally, involved in the gluconeogenesis. Catalyzes stereospecifically the conversion of dihydroxyacetone phosphate (DHAP) to D-glyceraldehyde-3-phosphate (G3P). This is Triosephosphate isomerase from Clostridium botulinum (strain Eklund 17B / Type B).